The chain runs to 221 residues: Flagellar L-ring protein 1 (221 aa).

A signal peptide spans 1-16; sequence MKRFLILTPMVLALCG. The N-palmitoyl cysteine moiety is linked to residue C17. C17 carries the S-diacylglycerol cysteine lipid modification.

This sequence belongs to the FlgH family. As to quaternary structure, the basal body constitutes a major portion of the flagellar organelle and consists of four rings (L,P,S, and M) mounted on a central rod.

The protein localises to the cell outer membrane. The protein resides in the bacterial flagellum basal body. Assembles around the rod to form the L-ring and probably protects the motor/basal body from shearing forces during rotation. This chain is Flagellar L-ring protein 1, found in Yersinia pestis.